The sequence spans 108 residues: UPF0060 membrane protein sll0793 (108 aa).

Transmembrane regions (helical) follow at residues 7–27 (LYFV…WLWI), 32–52 (SVWL…VATL), 64–84 (YGGI…NVVV), and 86–106 (RLDW…MYAN).

Belongs to the UPF0060 family.

Its subcellular location is the cell inner membrane. This chain is UPF0060 membrane protein sll0793, found in Synechocystis sp. (strain ATCC 27184 / PCC 6803 / Kazusa).